Consider the following 122-residue polypeptide: Small ribosomal subunit protein bS6 (122 aa).

It belongs to the bacterial ribosomal protein bS6 family.

Its function is as follows. Binds together with bS18 to 16S ribosomal RNA. This is Small ribosomal subunit protein bS6 from Methylibium petroleiphilum (strain ATCC BAA-1232 / LMG 22953 / PM1).